A 342-amino-acid polypeptide reads, in one-letter code: S-adenosylmethionine:tRNA ribosyltransferase-isomerase (342 aa).

Belongs to the QueA family. As to quaternary structure, monomer.

It localises to the cytoplasm. It carries out the reaction 7-aminomethyl-7-carbaguanosine(34) in tRNA + S-adenosyl-L-methionine = epoxyqueuosine(34) in tRNA + adenine + L-methionine + 2 H(+). The protein operates within tRNA modification; tRNA-queuosine biosynthesis. Functionally, transfers and isomerizes the ribose moiety from AdoMet to the 7-aminomethyl group of 7-deazaguanine (preQ1-tRNA) to give epoxyqueuosine (oQ-tRNA). This chain is S-adenosylmethionine:tRNA ribosyltransferase-isomerase, found in Streptococcus pneumoniae serotype 19F (strain G54).